We begin with the raw amino-acid sequence, 606 residues long: Melanoma-associated antigen D2 (606 aa).

Disordered regions lie at residues 1–29 (MSDT…MMQT) and 52–204 (SEDV…GGRR). Ser2 is modified (N-acetylserine). Position 5 is a phosphoserine (Ser5). Phosphothreonine is present on Thr72. The segment covering 79 to 100 (PATQASSTTQLTDTQVLATENK) has biased composition (polar residues). The span at 122–131 (ETKKVSHVAD) shows a compositional bias: basic and acidic residues. The span at 142–164 (EAAPSQASADEPEPESAAAQSQE) shows a compositional bias: low complexity. Phosphoserine is present on Ser157. The span at 171–181 (KVKAKKARKVK) shows a compositional bias: basic residues. A phosphoserine mark is found at Ser190, Ser191, Ser194, Ser197, Ser244, and Ser247. Residues 248–260 (PKARRGKARRRAA) show a composition bias toward basic residues. The tract at residues 248-275 (PKARRGKARRRAAKLQSSQEPEAPPPRD) is disordered. A phosphoserine mark is found at Ser264 and Ser265. The MAGE domain maps to 279 to 478 (LQGRANDLVK…KEWAAQYREA (200 aa)). Residues 534–563 (GAEAKAKAQESGSASTGASTSTNNSASASA) are disordered.

Interacts with GNAS.

Functionally, regulates the expression, localization to the plasma membrane and function of the sodium chloride cotransporters SLC12A1 and SLC12A3, two key components of salt reabsorption in the distal renal tubule. This is Melanoma-associated antigen D2 (MAGED2) from Pongo abelii (Sumatran orangutan).